The chain runs to 723 residues: Catalase-peroxidase (723 aa).

The tryptophyl-tyrosyl-methioninium (Trp-Tyr) (with M-252) cross-link spans 98–226 (WHSAGSYRVG…LAAVMMGLIY (129 aa)). Histidine 99 functions as the Proton acceptor in the catalytic mechanism. Positions 226 to 252 (YVNPEGVDGNPDPLKTAKDMRVTFARM) form a cross-link, tryptophyl-tyrosyl-methioninium (Tyr-Met) (with W-98). Histidine 267 is a binding site for heme b.

This sequence belongs to the peroxidase family. Peroxidase/catalase subfamily. Homodimer or homotetramer. It depends on heme b as a cofactor. In terms of processing, formation of the three residue Trp-Tyr-Met cross-link is important for the catalase, but not the peroxidase activity of the enzyme.

The enzyme catalyses H2O2 + AH2 = A + 2 H2O. The catalysed reaction is 2 H2O2 = O2 + 2 H2O. Bifunctional enzyme with both catalase and broad-spectrum peroxidase activity. This is Catalase-peroxidase from Vibrio vulnificus (strain CMCP6).